The following is a 195-amino-acid chain: Keratin-associated protein 4-11 (195 aa).

27 tandem repeats follow at residues 5-9 (CCGSV), 24-28 (CCRPS), 29-33 (CCETT), 34-38 (CCRTT), 44-48 (CCVSS), 49-53 (CCRPQ), 54-58 (CCQSV), 59-63 (CCQPT), 64-68 (CCRPR), 69-73 (CCISS), 74-78 (CCRPS), 79-83 (CCVSS), 84-88 (CCKPQ), 89-93 (CCQSM), 94-98 (CCQPT), 99-103 (CCRPR), 104-108 (CCISS), 109-113 (CCRPS), 114-118 (CCVSS), 119-123 (CCRPQ), 124-128 (CCQSV), 129-133 (CCQPT), 134-138 (CCHPS), 144-148 (CCRPS), 149-153 (CCESS), 154-158 (CCRPC), and 159-163 (CCLRP). The 27 X 5 AA repeats of C-C-[GIKRQVHEL]-[SPTR]-[STVQRMC] stretch occupies residues 5–163 (CCGSVCSHQG…CCRPCCCLRP (159 aa)).

This sequence belongs to the KRTAP type 4 family. As to quaternary structure, interacts with hair keratins. In terms of tissue distribution, expressed in the hair follicles.

In terms of biological role, in the hair cortex, hair keratin intermediate filaments are embedded in an interfilamentous matrix, consisting of hair keratin-associated proteins (KRTAP), which are essential for the formation of a rigid and resistant hair shaft through their extensive disulfide bond cross-linking with abundant cysteine residues of hair keratins. The matrix proteins include the high-sulfur and high-glycine-tyrosine keratins. The chain is Keratin-associated protein 4-11 (KRTAP4-11) from Homo sapiens (Human).